Reading from the N-terminus, the 300-residue chain is UDP-3-O-acyl-N-acetylglucosamine deacetylase (300 aa).

The Zn(2+) site is built by H78, H237, and D241. Residue H264 is the Proton donor of the active site.

It belongs to the LpxC family. The cofactor is Zn(2+).

The enzyme catalyses a UDP-3-O-[(3R)-3-hydroxyacyl]-N-acetyl-alpha-D-glucosamine + H2O = a UDP-3-O-[(3R)-3-hydroxyacyl]-alpha-D-glucosamine + acetate. It functions in the pathway glycolipid biosynthesis; lipid IV(A) biosynthesis; lipid IV(A) from (3R)-3-hydroxytetradecanoyl-[acyl-carrier-protein] and UDP-N-acetyl-alpha-D-glucosamine: step 2/6. Functionally, catalyzes the hydrolysis of UDP-3-O-myristoyl-N-acetylglucosamine to form UDP-3-O-myristoylglucosamine and acetate, the committed step in lipid A biosynthesis. In Acinetobacter baumannii (strain SDF), this protein is UDP-3-O-acyl-N-acetylglucosamine deacetylase.